Reading from the N-terminus, the 183-residue chain is 2-epi-5-epi-valiolone epimerase (183 aa).

The 145-residue stretch at 11–155 folds into the VOC domain; that stretch reads AVHHVAYTVP…WGMQLELINL (145 aa). Residues His14, Glu76, His99, and Glu151 each coordinate a divalent metal cation.

Homodimer. The cofactor is a divalent metal cation.

The catalysed reaction is 2-epi-5-epi-valiolone = 5-epi-valiolone. Its pathway is antibiotic biosynthesis. In terms of biological role, catalyzes the epimerization of 2-epi-5-epi-valiolone to 5-epi-valiolone. Involved in cetoniacytone A biosynthesis. This is 2-epi-5-epi-valiolone epimerase from Actinomyces sp.